We begin with the raw amino-acid sequence, 219 residues long: tRNA (guanine-N(7)-)-methyltransferase (219 aa).

Residues glutamate 44, aspartate 69, glutamate 102, and asparagine 125 each contribute to the S-adenosyl-L-methionine site. Residues lysine 129 and aspartate 161 each coordinate substrate.

Belongs to the class I-like SAM-binding methyltransferase superfamily. TrmB family.

The catalysed reaction is guanosine(46) in tRNA + S-adenosyl-L-methionine = N(7)-methylguanosine(46) in tRNA + S-adenosyl-L-homocysteine. The protein operates within tRNA modification; N(7)-methylguanine-tRNA biosynthesis. Functionally, catalyzes the formation of N(7)-methylguanine at position 46 (m7G46) in tRNA. The polypeptide is tRNA (guanine-N(7)-)-methyltransferase (Clostridium perfringens (strain SM101 / Type A)).